We begin with the raw amino-acid sequence, 186 residues long: MKTIEVDDELYHYIASRTQAIGESASDILRRLLRLPSSPQPFVLVQPNIAEELNASTKSTNQAKKQTNIEKTVQKFERVLKSDTFVNETKNVRRFLMLLSALHISDQQGFANATAVVTGTERTYFATNEDMLLRCGNGVKAKKIPDSPFWVVTNNSTARKGLILTAVMQSMQMPSHLIDRVRVLFA.

This sequence belongs to the SeqA family. Homodimer. Polymerizes to form helical filaments.

It is found in the cytoplasm. In terms of biological role, negative regulator of replication initiation, which contributes to regulation of DNA replication and ensures that replication initiation occurs exactly once per chromosome per cell cycle. Binds to pairs of hemimethylated GATC sequences in the oriC region, thus preventing assembly of replication proteins and re-initiation at newly replicated origins. Repression is relieved when the region becomes fully methylated. The protein is Negative modulator of initiation of replication of Haemophilus ducreyi (strain 35000HP / ATCC 700724).